We begin with the raw amino-acid sequence, 741 residues long: Zinc transporter ZIP6 (741 aa).

The N-terminal stretch at 1–20 (MATNLSVIMILTFALWVTNP) is a signal peptide. At 21–311 (LHELQSTAAF…PKTYSLQIAW (291 aa)) the chain is on the extracellular side. A glycan (N-linked (GlcNAc...) asparagine) is linked at Asn68. A compositionally biased stretch (basic and acidic residues) spans 95–111 (HDHERHSDHERHSDHER). Disordered stretches follow at residues 95–172 (HDHE…EVTS) and 189–213 (ETPK…EKSR). Positions 135–147 (DNSGKNPNTSQGK) are enriched in polar residues. Asn142 is a glycosylation site (N-linked (GlcNAc...) asparagine). Positions 150–162 (RPAEHVNGRRNGK) are enriched in basic and acidic residues. The segment covering 163 to 172 (ESASSSEVTS) has biased composition (low complexity). Positions 200–209 (INPSTPPSIT) are enriched in polar residues. N-linked (GlcNAc...) asparagine glycosylation is found at Asn226, Asn251, and Asn268. The chain crosses the membrane as a helical span at residues 312–332 (LGGFIAISIISFLSLLGVILV). Residues 333–341 (PLMNRVFFK) lie on the Cytoplasmic side of the membrane. A helical transmembrane segment spans residues 342 to 362 (FLLSFLVALAVGTLSGDALLH). Topologically, residues 363 to 409 (LLPHSHASHHHSHSHEEPAMEMKRGPLFSHLSAQNLEESSYFDSTWK) are extracellular. A helical transmembrane segment spans residues 410-430 (GLTALGGLYFMFLVEHVLTLI). Residues 431–643 (KQFKDKKKKN…LKAGMTVKQA (213 aa)) lie on the Cytoplasmic side of the membrane. The disordered stretch occupies residues 434–494 (KDKKKKNQKK…QEPSPFDSQQ (61 aa)). The stretch at 450–475 (VESKKQLSKYESQLSTNEEKVDTGER) forms a coiled coil. Ser457 and Ser464 each carry phosphoserine. The segment covering 466-477 (NEEKVDTGERPE) has biased composition (basic and acidic residues). The segment covering 481-494 (QADSQEPSPFDSQQ) has biased composition (polar residues). Residues 644–664 (VLYNALSAMLAYLGMATGIFI) form a helical membrane-spanning segment. At 665 to 672 (GHYAENVS) the chain is on the extracellular side. A glycan (N-linked (GlcNAc...) asparagine) is linked at Asn670. The helical transmembrane segment at 673–693 (MWIFALTAGLFMYVALVDMVP) threads the bilayer. The Cytoplasmic portion of the chain corresponds to 694 to 710 (EMLHNDASDHGCSRWGY). Residues 711-731 (FFLQNAGILLGFGIMLLISIF) form a helical membrane-spanning segment. Residues 732-741 (EHKIVFRINF) lie on the Extracellular side of the membrane.

This sequence belongs to the ZIP transporter (TC 2.A.5) family. As to quaternary structure, interacts with SLC39A10; which triggers cells to undergo EMT and mitosis. Found in a complex with SLC39A6, SLC39A10 and with the 'Ser-727' phosphorylated form of STAT3 throughout mitosis. Found in a complex with SLC39A6, SLC39A10 and with NCAM1; this complex controls NCAM1 phosphorylation and integration into focal adhesion complexes during epithelial-to-mesenchymal transition (EMT). Found in a complex with SLC39A6, SLC39A10 and with GSK3B that controls NCAM1 phosphorylation. In terms of processing, cleaved on the N-terminus before locating to the plasma membrane. N-glycosylated. Post-translationally, phosphorylated by ZAP70 in response to TCR stimulation leading to its activation. In terms of tissue distribution, expressed in the endothelial cells of the brain capillaries.

It localises to the cell membrane. It is found in the cell projection. The protein resides in the lamellipodium membrane. The protein localises to the membrane raft. Its subcellular location is the apical cell membrane. The enzyme catalyses Zn(2+)(in) = Zn(2+)(out). Functionally, zinc-influx transporter which plays a role in zinc homeostasis and in the induction of epithelial-to-mesenchymal transition (EMT). When associated with SLC39A10, the heterodimer formed by SLC39A10 and SLC39A6 mediates cellular zinc uptake to trigger cells to undergo epithelial- to-mesenchymal transition (EMT). The SLC39A10-SLC39A6 heterodimer also controls NCAM1 phosphorylation and its integration into focal adhesion complexes during EMT. Zinc influx inactivates GSK3B, enabling unphosphorylated SNAI1 in the nucleus to down-regulate adherence genes such as CDH1, causing loss of cell adherence. In addition, the SLC39A10-SLC39A6 heterodimer plays an essentiel role in initiating mitosis by importing zinc into cells to initiate a pathway resulting in the onset of mitosis. Participates in the T-cell receptor signaling regulation by mediating cellular zinc uptake into activated lymphocytes. Regulates the zinc influx necessary for proper meiotic progression to metaphase II (MII) that allows the oocyte-to-egg transition. The sequence is that of Zinc transporter ZIP6 from Rattus norvegicus (Rat).